The following is a 253-amino-acid chain: MSKLTQVFKQTKLCIGYLTAGDGGTSYTIEAAKALIQGGVDILELGFPFSDPVADNPEIQVSHDRALAENLTSETLLEIVEGIRAFNQEVPLILYSYYNPLLQRDLDYLRRLKDAGINGVCVIDLPAPLSHGEKSPFFEDLLAVGLDPILLISAGTTPERMSLIQEYARGFLYYIPCQATRDSEVGIKEEFRKVREHFDLPIVDRRDICDKKEAAHVLNYSDGFIVKTAFVHQTTMDSSVETLTALAQTVIPG.

Residues E44 and D55 each act as proton acceptor in the active site.

It belongs to the TrpA family. In terms of assembly, tetramer of two alpha and two beta chains.

It carries out the reaction (1S,2R)-1-C-(indol-3-yl)glycerol 3-phosphate + L-serine = D-glyceraldehyde 3-phosphate + L-tryptophan + H2O. Its pathway is amino-acid biosynthesis; L-tryptophan biosynthesis; L-tryptophan from chorismate: step 5/5. Functionally, the alpha subunit is responsible for the aldol cleavage of indoleglycerol phosphate to indole and glyceraldehyde 3-phosphate. This Chlamydia trachomatis serovar D (strain ATCC VR-885 / DSM 19411 / UW-3/Cx) protein is Tryptophan synthase alpha chain (trpA).